Reading from the N-terminus, the 256-residue chain is Pimeloyl-[acyl-carrier protein] methyl ester esterase (256 aa).

The AB hydrolase-1 domain occupies 15-242; sequence HLVLLHGWGL…AAHAPFISHP (228 aa). Substrate contacts are provided by residues tryptophan 22, 82–83, and 143–147; these read SL and FLALQ. Catalysis depends on serine 82, which acts as the Nucleophile. Catalysis depends on residues aspartate 207 and histidine 235. Histidine 235 contributes to the substrate binding site.

Belongs to the AB hydrolase superfamily. Carboxylesterase BioH family. In terms of assembly, monomer.

Its subcellular location is the cytoplasm. It carries out the reaction 6-carboxyhexanoyl-[ACP] methyl ester + H2O = 6-carboxyhexanoyl-[ACP] + methanol + H(+). Its pathway is cofactor biosynthesis; biotin biosynthesis. Its function is as follows. The physiological role of BioH is to remove the methyl group introduced by BioC when the pimeloyl moiety is complete. It allows to synthesize pimeloyl-ACP via the fatty acid synthetic pathway through the hydrolysis of the ester bonds of pimeloyl-ACP esters. The protein is Pimeloyl-[acyl-carrier protein] methyl ester esterase of Shigella boydii serotype 4 (strain Sb227).